The sequence spans 399 residues: Formate-dependent phosphoribosylglycinamide formyltransferase (399 aa).

N(1)-(5-phospho-beta-D-ribosyl)glycinamide-binding positions include 21–22 (EL) and glutamate 81. ATP-binding positions include arginine 114, lysine 156, 161 to 166 (SSGKGQ), 196 to 199 (EGFI), and glutamate 204. Residues 119–314 (RLAAEELGLP…EFELHARAIL (196 aa)) enclose the ATP-grasp domain. Mg(2+) contacts are provided by glutamate 273 and glutamate 285. N(1)-(5-phospho-beta-D-ribosyl)glycinamide is bound by residues aspartate 292, lysine 361, and 368–369 (RR). A disordered region spans residues 370-399 (MGVAVANGESTDQARERAKLAASKVRPTRT).

This sequence belongs to the PurK/PurT family. In terms of assembly, homodimer.

The catalysed reaction is N(1)-(5-phospho-beta-D-ribosyl)glycinamide + formate + ATP = N(2)-formyl-N(1)-(5-phospho-beta-D-ribosyl)glycinamide + ADP + phosphate + H(+). It participates in purine metabolism; IMP biosynthesis via de novo pathway; N(2)-formyl-N(1)-(5-phospho-D-ribosyl)glycinamide from N(1)-(5-phospho-D-ribosyl)glycinamide (formate route): step 1/1. In terms of biological role, involved in the de novo purine biosynthesis. Catalyzes the transfer of formate to 5-phospho-ribosyl-glycinamide (GAR), producing 5-phospho-ribosyl-N-formylglycinamide (FGAR). Formate is provided by PurU via hydrolysis of 10-formyl-tetrahydrofolate. The polypeptide is Formate-dependent phosphoribosylglycinamide formyltransferase (Dechloromonas aromatica (strain RCB)).